The following is a 320-amino-acid chain: Zinc transporter ZitB (320 aa).

The next 6 helical transmembrane spans lie at 16-36 (LLAA…GGLL), 43-63 (LADA…LVAV), 85-105 (AAFV…WEAI), 117-137 (VPML…FWLL), 153-173 (LHVL…IIIL), and 180-200 (IDPI…WALL).

This sequence belongs to the cation diffusion facilitator (CDF) transporter (TC 2.A.4) family. SLC30A subfamily.

It localises to the cell inner membrane. Its function is as follows. Involved in zinc efflux across the cytoplasmic membrane, thus reducing zinc accumulation in the cytoplasm and rendering bacteria more resistant to zinc. It may contribute to zinc homeostasis at low concentrations of zinc. The polypeptide is Zinc transporter ZitB (Pectobacterium atrosepticum (strain SCRI 1043 / ATCC BAA-672) (Erwinia carotovora subsp. atroseptica)).